The following is a 339-amino-acid chain: TATA-box-binding protein (339 aa).

Disordered stretches follow at residues 1–21 (MDQN…QGAM), 36–71 (TGLT…QQQQ), and 127–159 (LTTA…SESS). Positions 38 to 50 (LTPQPIQNTNSLS) are enriched in polar residues. Composition is skewed to low complexity over residues 57 to 71 (RQQQ…QQQQ), 127 to 138 (LTTAPLPGTTPL), and 146 to 156 (MTPITPATPAS). Repeat copies occupy residues 165–241 (LQNI…ARVV) and 255–332 (IQNM…YPIL). 5 residues coordinate DNA: asparagine 167, arginine 203, lysine 218, asparagine 257, and arginine 294.

It belongs to the TBP family. Binds DNA as monomer. Component of the TFIID basal transcription factor complex, composed of TATA-box-binding protein TBP, and a number of TBP-associated factors (TAFs), including TAF1, TAF2, TAF3, TAF4, TAF5, TAF6, TAF7, TAF8, TAF9, TAF10, TAF11, TAF12 and TAF13. Part of a TFIID-containing RNA polymerase II pre-initiation complex that is composed of TBP and at least GTF2A1, GTF2A2, GTF2E1, GTF2E2, GTF2F1, GTF2H2, GTF2H3, GTF2H4, GTF2H5, GTF2B, TCEA1, ERCC2, ERCC3, TAF1, TAF2, TAF3, TAF4, TAF5, TAF6, TAF7, TAF8, TAF9, TAF10, TAF11, TAF12 and TAF13. Component of the transcription factor SL1/TIF-IB complex, composed of TBP and at least TAF1A, TAF1B, TAF1C and TAF1D. Association of TBP to form either TFIID or SL1/TIF-IB appears to be mutually exclusive. Interacts with TAF1A, TAF1B and TAF1C. Interacts with TFIIB, NCOA6, DRAP1, DR1 and ELF3. Interacts with SPIB, SNAPC1, SNAPC2 and SNAPC4. Interacts with UTF1. Interacts with BRF2; this interaction promotes recruitment of BRF2 to TATA box-containing promoters. Interacts with UBTFD. Interacts with GPBP1D. Interacts with CITED2. Interacts with ATF7IP. Interacts with LLPH. Interacts with HSF1 (via transactivation domain). Interacts with GTF2B (via C-terminus); this interaction with promoter-bound TBP guides RNA polymerase II into the pre-initiation complex (PIC). Interacts with PAX5. Interacts with MSX1; the interaction may inhibit MSX1 autoinactivation. As to quaternary structure, (Microbial infection) Interacts with HIV-1 Tat. In terms of assembly, (Microbial infection) Interacts with herpes simplex virus 1 ICP4. (Microbial infection) Interacts with herpes simplex virus 2 ICP4. As to quaternary structure, (Microbial infection) Interacts with human adenovirus E1A protein; this interaction probably disrupts the TBP-TATA complex. As to expression, widely expressed, with levels highest in the testis and ovary.

The protein resides in the nucleus. Functionally, the TFIID basal transcription factor complex plays a major role in the initiation of RNA polymerase II (Pol II)-dependent transcription. TFIID recognizes and binds promoters with or without a TATA box via its subunit TBP, a TATA-box-binding protein, and promotes assembly of the pre-initiation complex (PIC). The TFIID complex consists of TBP and TBP-associated factors (TAFs), including TAF1, TAF2, TAF3, TAF4, TAF5, TAF6, TAF7, TAF8, TAF9, TAF10, TAF11, TAF12 and TAF13. The TFIID complex structure can be divided into 3 modules TFIID-A, TFIID-B, and TFIID-C. TBP forms the TFIID-A module together with TAF3 and TAF5. TBP is a general transcription factor that functions at the core of the TFIID complex. During assembly of the core PIC on the promoter, as part of TFIID, TBP binds to and also bends promoter DNA, irrespective of whether the promoter contains a TATA box. Component of a BRF2-containing transcription factor complex that regulates transcription mediated by RNA polymerase III. Component of the transcription factor SL1/TIF-IB complex, which is involved in the assembly of the PIC during RNA polymerase I-dependent transcription. The rate of PIC formation probably is primarily dependent on the rate of association of SL1 with the rDNA promoter. SL1 is involved in stabilization of nucleolar transcription factor 1/UBTF on rDNA. This chain is TATA-box-binding protein (TBP), found in Homo sapiens (Human).